The chain runs to 136 residues: TBK1 inhibitor DP96R (136 aa).

The tract at residues 66 to 86 is disordered; the sequence is NNALEKPAGANNIPEKSAGRM.

Belongs to the asfivirus DP96R family.

Its function is as follows. Inhibits cGAS-STING-mediated type I IFN expression and NF-kB activation by inhibiting TBK1 and IKBKB/IKKB. Inhibits host TBK1 phosphorylation. This chain is TBK1 inhibitor DP96R, found in Ornithodoros (relapsing fever ticks).